A 915-amino-acid chain; its full sequence is Hexokinase HKDC1 (915 aa).

The mitochondrial-binding peptide (MBP) stretch occupies residues 1 to 20; sequence MFAVHLVAFYFTKLKEDQIK. Hexokinase domains are found at residues 16–458 and 464–903; these read EDQI…MVTA and QAQR…LITA. Residues arginine 30 and 84–89 contribute to the ATP site; that span reads DLGGSK. Residues 73–207 are hexokinase small subdomain 1; that stretch reads DGSENGEFLS…DLDVDILALV (135 aa). Residue 84–91 coordinates D-glucose 6-phosphate; it reads DLGGSKFR. D-glucose is bound by residues serine 155, 172–173, and 208–209; these read TK and ND. The hexokinase large subdomain 1 stretch occupies residues 208-447; it reads NDTVGTMMTC…CDVRFLLSES (240 aa). D-glucose 6-phosphate is bound by residues aspartate 209 and threonine 232. Residues asparagine 235, glutamate 260, and 291-294 contribute to the D-glucose site; that span reads QLFE. 413 to 415 contacts D-glucose 6-phosphate; that stretch reads DGT. An ATP-binding site is contributed by 425 to 426; that stretch reads KR. D-glucose 6-phosphate contacts are provided by residues serine 449 and 532–536; that span reads DLGGT. The tract at residues 521 to 652 is hexokinase small subdomain 2; it reads DGTEKGKFLA…EFDLDIVAIV (132 aa). 532–537 is a binding site for ATP; sequence DLGGTN. Residues 600 to 601, 617 to 618, and 653 to 654 contribute to the D-glucose site; these read SF, TK, and ND. The interval 653-892 is hexokinase large subdomain 2; the sequence is NDTVGTMMTC…CDVTFMLSED (240 aa). D-glucose 6-phosphate-binding residues include aspartate 654 and threonine 677. Threonine 677 provides a ligand contact to ATP. D-glucose is bound by residues 679-680, glutamate 705, and glutamate 739; that span reads SN. ATP is bound by residues 744 to 745, 781 to 785, and 860 to 864; these read GM, TKFLS, and TLYKL. D-glucose 6-phosphate contacts are provided by residues 858 to 860 and serine 894; that span reads DGT.

Belongs to the hexokinase family. Widely expressed. Detected in retina, brain, cerebellum, liver, lung, kidney, spleen, pancreas and intestine.

It is found in the cytoplasm. It localises to the mitochondrion membrane. Its subcellular location is the photoreceptor inner segment. It carries out the reaction a D-hexose + ATP = a D-hexose 6-phosphate + ADP + H(+). The enzyme catalyses D-glucose + ATP = D-glucose 6-phosphate + ADP + H(+). It functions in the pathway carbohydrate metabolism; hexose metabolism. It participates in carbohydrate degradation; glycolysis; D-glyceraldehyde 3-phosphate and glycerone phosphate from D-glucose: step 1/4. Catalyzes the phosphorylation of hexose to hexose 6-phosphate, although at very low level compared to other hexokinases. Has low glucose phosphorylating activity compared to other hexokinases. Involved in glucose homeostasis and hepatic lipid accumulation. Required to maintain whole-body glucose homeostasis during pregnancy; however additional evidences are required to confirm this role. In Mus musculus (Mouse), this protein is Hexokinase HKDC1.